Consider the following 254-residue polypeptide: Thiazole synthase (254 aa).

Residue lysine 95 is the Schiff-base intermediate with DXP of the active site. Residues glycine 156, alanine 182–glycine 183, and asparagine 204–threonine 205 each bind 1-deoxy-D-xylulose 5-phosphate.

Belongs to the ThiG family. Homotetramer. Forms heterodimers with either ThiH or ThiS.

The protein resides in the cytoplasm. It carries out the reaction [ThiS sulfur-carrier protein]-C-terminal-Gly-aminoethanethioate + 2-iminoacetate + 1-deoxy-D-xylulose 5-phosphate = [ThiS sulfur-carrier protein]-C-terminal Gly-Gly + 2-[(2R,5Z)-2-carboxy-4-methylthiazol-5(2H)-ylidene]ethyl phosphate + 2 H2O + H(+). It functions in the pathway cofactor biosynthesis; thiamine diphosphate biosynthesis. Its function is as follows. Catalyzes the rearrangement of 1-deoxy-D-xylulose 5-phosphate (DXP) to produce the thiazole phosphate moiety of thiamine. Sulfur is provided by the thiocarboxylate moiety of the carrier protein ThiS. In vitro, sulfur can be provided by H(2)S. This chain is Thiazole synthase, found in Shewanella sp. (strain W3-18-1).